The sequence spans 267 residues: Serine/arginine-rich splicing factor 1 (267 aa).

Residues 16–91 (CRIYVGNLPP…YRLRVEFPRS (76 aa)) form the RRM 1 domain. Disordered regions lie at residues 90-137 (RSGR…PSRR) and 212-267 (KVDG…RSRT). The span at 93-127 (RGAGGRGGGGGGGGGGGGGGGGGGGGGGGGGGGAP) shows a compositional bias: gly residues. The region spanning 140–214 (YRVVVSGLPP…ETAYIRVKVD (75 aa)) is the RRM 2 domain. Over residues 224 to 267 (SRSRSRSRSRSRSRSNSRSRSYSPRRSRGSPRYSPRHSRSRSRT) the composition is skewed to basic residues.

This sequence belongs to the splicing factor SR family.

It localises to the cytoplasm. Its subcellular location is the nucleus speckle. Its function is as follows. May play a role in preventing exon skipping, ensuring the accuracy of splicing and regulating alternative splicing. This is Serine/arginine-rich splicing factor 1 (srsf1) from Xenopus tropicalis (Western clawed frog).